The chain runs to 734 residues: Threonine--tRNA ligase, cytoplasmic (734 aa).

Residues 1-41 are disordered; sequence MSASEAGVTEQVKKLSVKDSSNDAVKPNKKENKKSKQQSLY. Basic and acidic residues predominate over residues 11–30; that stretch reads QVKKLSVKDSSNDAVKPNKK. The region spanning 69–135 is the TGS domain; sequence SMPRVPLKIV…EGEANEEIKL (67 aa). Residues Ser-195 and Ser-289 each carry the phosphoserine modification. A phosphothreonine mark is found at Thr-297 and Thr-381. A phosphoserine mark is found at Ser-453 and Ser-457. Thr-460 carries the post-translational modification Phosphothreonine. Ser-605 is subject to Phosphoserine.

The protein belongs to the class-II aminoacyl-tRNA synthetase family.

Its subcellular location is the cytoplasm. It catalyses the reaction tRNA(Thr) + L-threonine + ATP = L-threonyl-tRNA(Thr) + AMP + diphosphate + H(+). This is Threonine--tRNA ligase, cytoplasmic (THS1) from Saccharomyces cerevisiae (strain ATCC 204508 / S288c) (Baker's yeast).